The chain runs to 423 residues: UPF0229 protein Pmen_4018 (423 aa).

Residues 65-108 (HHGRGGKQTIVHPGNKEFTAGERIPRPQGGGGGRGSGKASNSGE) are disordered.

Belongs to the UPF0229 family.

This chain is UPF0229 protein Pmen_4018, found in Ectopseudomonas mendocina (strain ymp) (Pseudomonas mendocina).